The chain runs to 261 residues: WW domain-binding protein 2 (261 aa).

Residues 1–84 (MALNKNHSEG…YLMKDCEIKQ (84 aa)) enclose the GRAM domain. Residue Y192 is modified to Phosphotyrosine. Residues 196–200 (PPPPY) carry the PPxY motif 1 motif. A compositionally biased stretch (pro residues) spans 196-209 (PPPPYPGPMEPPVS). A disordered region spans residues 196-261 (PPPPYPGPME…YYPPEDKKTQ (66 aa)). Residues 210–230 (GPSAPATPAAEAKAAEAAASA) are compositionally biased toward low complexity. The residue at position 231 (Y231) is a Phosphotyrosine. Pro residues predominate over residues 245-254 (SQPPPPPYYP). A PPxY motif 2 motif is present at residues 248–252 (PPPPY).

As to quaternary structure, binds to the WW domain of YAP1, WWP1 and WWP2. Interacts with NEDD4. Interacts with ESR1 and UBE3A. Post-translationally, phosphorylated in repsonse to EGF as well as estrogen and progesterone hormones. Tyr-192 and Tyr-231 are phosphorylated by YES and SRC inducing nuclear translocation. Expressed in the ear and the eye. Isoform 1 is expressed in brain, inner ear and organ of Corti. Isoform 2 is only detected in brain.

The protein localises to the cytoplasm. Its subcellular location is the nucleus. Functionally, acts as a transcriptional coactivator of estrogen and progesterone receptors (ESR1 and PGR) upon hormone activation. In presence of estrogen, binds to ESR1-responsive promoters. Synergizes with YAP1 to enhance PGR activity. Modulates expression of post-synaptic scaffolding proteins via regulation of ESR1, ESR2 and PGR. The polypeptide is WW domain-binding protein 2 (Wbp2) (Mus musculus (Mouse)).